Consider the following 586-residue polypeptide: Dual specificity tyrosine-phosphorylation-regulated kinase 3 (586 aa).

Residues 1 to 13 (MGGAARERGRKDA) are compositionally biased toward basic and acidic residues. The disordered stretch occupies residues 1-187 (MGGAARERGR…QGVIGGPNNG (187 aa)). One can recognise a Protein kinase domain in the interval 208-521 (YEVLKIIGKG…PAQALRHPWI (314 aa)). ATP contacts are provided by residues 214–222 (IGKGSFGQV), lysine 237, and 287–290 (FELL). Aspartate 334 acts as the Proton acceptor in catalysis. At tyrosine 368 the chain carries Phosphotyrosine. A Nuclear localization signal motif is present at residues 467-480 (RSRRGKKRGPPGSK).

The protein belongs to the protein kinase superfamily. CMGC Ser/Thr protein kinase family. MNB/DYRK subfamily. In terms of assembly, interacts with SIRT1. Requires Mg(2+) as cofactor. Protein kinase activity is activated following autophosphorylation at Tyr-368. Post-translationally, ubiquitinated at anaphase by the anaphase-promoting complex (APC/C), leading to its degradation by the proteasome. As to expression, expressed predominantly in testis. Expressed in late pachytene spermatocytes.

It is found in the nucleus. The protein localises to the cytoplasm. It localises to the nucleus speckle. The protein resides in the cytoplasmic granule. Its subcellular location is the cytoskeleton. It is found in the microtubule organizing center. The protein localises to the centrosome. The catalysed reaction is L-seryl-[protein] + ATP = O-phospho-L-seryl-[protein] + ADP + H(+). It catalyses the reaction L-threonyl-[protein] + ATP = O-phospho-L-threonyl-[protein] + ADP + H(+). The enzyme catalyses L-tyrosyl-[protein] + ATP = O-phospho-L-tyrosyl-[protein] + ADP + H(+). Its activity is regulated as follows. Protein kinase activity is activated following autophosphorylation at Tyr-368. Functionally, dual-specificity protein kinase that promotes disassembly of several types of membraneless organelles during mitosis, such as stress granules, nuclear speckles and pericentriolar material. Dual-specificity tyrosine-regulated kinases (DYRKs) autophosphorylate a critical tyrosine residue in their activation loop and phosphorylate their substrate on serine and threonine residues. Acts as a central dissolvase of membraneless organelles during the G2-to-M transition, after the nuclear-envelope breakdown: acts by mediating phosphorylation of multiple serine and threonine residues in unstructured domains of proteins, such as SRRM1 and PCM1. Does not mediate disassembly of all membraneless organelles: disassembly of P-body and nucleolus is not regulated by DYRK3. Dissolution of membraneless organelles at the onset of mitosis is also required to release mitotic regulators, such as ZNF207, from liquid-unmixed organelles where they are sequestered and keep them dissolved during mitosis. Regulates mTORC1 by mediating the dissolution of stress granules: during stressful conditions, DYRK3 partitions from the cytosol to the stress granule, together with mTORC1 components, which prevents mTORC1 signaling. When stress signals are gone, the kinase activity of DYRK3 is required for the dissolution of stress granule and mTORC1 relocation to the cytosol: acts by mediating the phosphorylation of the mTORC1 inhibitor AKT1S1, allowing full reactivation of mTORC1 signaling. Also acts as a negative regulator of EPO-dependent erythropoiesis: may place an upper limit on red cell production during stress erythropoiesis. Inhibits cell death due to cytokine withdrawal in hematopoietic progenitor cells. Promotes cell survival upon genotoxic stress through phosphorylation of SIRT1: this in turn inhibits p53/TP53 activity and apoptosis. The sequence is that of Dual specificity tyrosine-phosphorylation-regulated kinase 3 from Rattus norvegicus (Rat).